The sequence spans 402 residues: Prostaglandin E2 receptor EP1 subtype (402 aa).

Residues 1–35 (MSPCGPLNLSLAGEATTCAAPWVPNTSAVPPSGAS) are Extracellular-facing. Residues Asn8 and Asn25 are each glycosylated (N-linked (GlcNAc...) asparagine). A helical membrane pass occupies residues 36 to 62 (PALPIFSMTLGAVSNLLALALLAQAAG). Over 63–72 (RLRRRRSAAT) the chain is Cytoplasmic. Residues 73 to 96 (FLLFVASLLATDLAGHVIPGALVL) form a helical membrane-spanning segment. The Extracellular segment spans residues 97 to 111 (RLYTAGRAPAGGACH). Cys110 and Cys188 form a disulfide bridge. A helical transmembrane segment spans residues 112 to 133 (FLGGCMVFFGLCPLLLGCGMAV). Residues 134–155 (ERCVGVTRPLLHAARVSVARAR) lie on the Cytoplasmic side of the membrane. The chain crosses the membrane as a helical span at residues 156–177 (LALAAVAAVALAVALLPLARVG). The Extracellular portion of the chain corresponds to 178-201 (RYELQYPGTWCFIGLGPPGGWRQA). A helical transmembrane segment spans residues 202–227 (LLAGLFASLGLVALLAALVCNTLSGL). Topologically, residues 228-294 (ALLRARWRRR…ARRARAHDVE (67 aa)) are cytoplasmic. Residues 238 to 266 (SRRPPPASGPDSRRRWGAHGPRSASASSA) form a disordered region. The helical transmembrane segment at 295 to 321 (MVGQLVGIMVVSCICWSPMLVLVALAV) threads the bilayer. Residues 322-332 (GGWSSTSLQRP) lie on the Extracellular side of the membrane. A helical transmembrane segment spans residues 333–354 (LFLAVRLASWNQILDPWVYILL). At 355 to 402 (RQAVLRQLLRLLPPRAGAKGGPAGLGLTPSAWEASSLRSSRHSGLSHF) the chain is on the cytoplasmic side.

The protein belongs to the G-protein coupled receptor 1 family. In terms of processing, phosphorylated. In terms of tissue distribution, abundant in kidney. Lower level expression in lung, skeletal muscle and spleen, lowest expression in testis and not detected in liver brain and heart.

Its subcellular location is the cell membrane. Receptor for prostaglandin E2 (PGE2). The activity of this receptor is mediated by G(q) proteins which activate a phosphatidylinositol-calcium second messenger system. May play a role as an important modulator of renal function. Implicated the smooth muscle contractile response to PGE2 in various tissues. This chain is Prostaglandin E2 receptor EP1 subtype (PTGER1), found in Homo sapiens (Human).